A 90-amino-acid polypeptide reads, in one-letter code: Probable Fe(2+)-trafficking protein (90 aa).

The protein belongs to the Fe(2+)-trafficking protein family.

In terms of biological role, could be a mediator in iron transactions between iron acquisition and iron-requiring processes, such as synthesis and/or repair of Fe-S clusters in biosynthetic enzymes. The sequence is that of Probable Fe(2+)-trafficking protein from Nitrosomonas eutropha (strain DSM 101675 / C91 / Nm57).